The primary structure comprises 1178 residues: Integrin alpha-2 (1178 aa).

The signal sequence occupies residues 1-26 (MGPGQAGGALLLRLLMLVQGILNCLA). Topologically, residues 27 to 1129 (YNVGLPGAKI…KPTEKAEVPT (1103 aa)) are extracellular. 2 FG-GAP repeats span residues 31-89 (LPGA…TATC) and 98-158 (ASIS…FLTS). The cysteines at positions 80 and 89 are disulfide-linked. Asn102 and Asn109 each carry an N-linked (GlcNAc...) asparagine glycan. In terms of domain architecture, VWFA spans 185–362 (WEAVKNFLVK…TLGEQIFSIE (178 aa)). FG-GAP repeat units follow at residues 363-417 (GTVQ…VIFP), 420-472 (AFDQ…KQGN), 474-536 (TVIQ…ILNQ), 537-595 (HQFL…TIRT), and 601-661 (ILGS…FTPD). Asn429, Asn457, and Asn472 each carry an N-linked (GlcNAc...) asparagine glycan. The Cell attachment site motif lies at 480 to 482 (RGD). Residues Asp496, Asp498, Asp500, Asp504, Asp560, Asn562, Asp564, Asp568, Asp624, Asn626, Asp628, and Asp632 each contribute to the Ca(2+) site. 5 disulfides stabilise this stretch: Cys677/Cys734, Cys786/Cys792, Cys862/Cys873, Cys1016/Cys1047, and Cys1052/Cys1057. An N-linked (GlcNAc...) asparagine glycan is attached at Asn696. N-linked (GlcNAc...) asparagine glycosylation is found at Asn1054, Asn1071, and Asn1078. A helical transmembrane segment spans residues 1130–1151 (GVIIGSIIAGILLLLAMTAGLW). The Cytoplasmic portion of the chain corresponds to 1152-1178 (KLGFFKRQYKKMGQNPDEMDETTELNS). The short motif at 1154 to 1158 (GFFKR) is the GFFKR motif element.

Belongs to the integrin alpha chain family. Heterodimer of an alpha and a beta subunit. Alpha-2 associates with beta-1. Interacts with HPS5 and RAB21.

It is found in the membrane. In terms of biological role, integrin alpha-2/beta-1 is a collagen receptor, being responsible for adhesion of platelets and other cells to collagens, modulation of collagen and collagenase gene expression, force generation and organization of newly synthesized extracellular matrix. It is also a receptor for laminins, collagen C-propeptides and E-cadherin. Mice homozygous for a null mutation in the alpha-2 die very early in embryogenesis. This Mus musculus (Mouse) protein is Integrin alpha-2 (Itga2).